A 497-amino-acid chain; its full sequence is Cytochrome P450 26A1 (497 aa).

C442 contacts heme.

It belongs to the cytochrome P450 family. Heme serves as cofactor.

It localises to the endoplasmic reticulum membrane. It is found in the microsome membrane. The catalysed reaction is all-trans-retinoate + reduced [NADPH--hemoprotein reductase] + O2 = all-trans-(4S)-hydroxyretinoate + oxidized [NADPH--hemoprotein reductase] + H2O + H(+). The enzyme catalyses all-trans-(4S)-hydroxyretinoate + reduced [NADPH--hemoprotein reductase] + O2 = all-trans-(4S,16)-dihydroxyretinoate + oxidized [NADPH--hemoprotein reductase] + H2O + H(+). It carries out the reaction all-trans-retinoate + reduced [NADPH--hemoprotein reductase] + O2 = all-trans-18-hydroxyretinoate + oxidized [NADPH--hemoprotein reductase] + H2O + H(+). In terms of biological role, a cytochrome P450 monooxygenase involved in the metabolism of retinoates (RAs), the active metabolites of vitamin A, and critical signaling molecules in animals. RAs exist as at least four different isomers: all-trans-RA (atRA), 9-cis-RA, 13-cis-RA, and 9,13-dicis-RA, where atRA is considered to be the biologically active isomer, although 9-cis-RA and 13-cis-RA also have activity. Catalyzes the hydroxylation of atRA primarily at C-4 and C-18, thereby contributing to the regulation of atRA homeostasis and signaling. Hydroxylation of atRA limits its biological activity and initiates a degradative process leading to its eventual elimination. Involved in the convertion of atRA to all-trans-4-oxo-RA. Able to metabolize other RAs such as 9-cis, 13-cis and 9,13-di-cis RA. Can oxidize all-trans-13,14-dihydroretinoate (DRA) to metabolites which could include all-trans-4-oxo-DRA, all-trans-4-hydroxy-DRA, all-trans-5,8-epoxy-DRA, and all-trans-18-hydroxy-DRA. May play a role in the oxidative metabolism of xenobiotics such as tazarotenic acid. This chain is Cytochrome P450 26A1, found in Mus musculus (Mouse).